Here is a 907-residue protein sequence, read N- to C-terminus: Protein translocase subunit SecA (907 aa).

Residues Q87, 105–109, and D512 contribute to the ATP site; that span reads GEGKT. The segment at 862–885 is disordered; that stretch reads AENQLDDGHSSDQNHSPMVRDERK. Basic and acidic residues predominate over residues 867–885; it reads DDGHSSDQNHSPMVRDERK. 4 residues coordinate Zn(2+): C892, C894, C903, and H904.

Belongs to the SecA family. In terms of assembly, monomer and homodimer. Part of the essential Sec protein translocation apparatus which comprises SecA, SecYEG and auxiliary proteins SecDF-YajC and YidC. Requires Zn(2+) as cofactor.

The protein resides in the cell inner membrane. The protein localises to the cytoplasm. The catalysed reaction is ATP + H2O + cellular proteinSide 1 = ADP + phosphate + cellular proteinSide 2.. In terms of biological role, part of the Sec protein translocase complex. Interacts with the SecYEG preprotein conducting channel. Has a central role in coupling the hydrolysis of ATP to the transfer of proteins into and across the cell membrane, serving both as a receptor for the preprotein-SecB complex and as an ATP-driven molecular motor driving the stepwise translocation of polypeptide chains across the membrane. The protein is Protein translocase subunit SecA of Aliivibrio salmonicida (strain LFI1238) (Vibrio salmonicida (strain LFI1238)).